Consider the following 3898-residue polypeptide: Genome polyprotein (3898 aa).

The region spanning 1-168 is the Peptidase C53 domain; sequence MELITNELLY…LDCPLWVTSC (168 aa). Disordered regions lie at residues 47–72, 172–209, and 223–245; these read LPHK…CRSG, KEEG…KPPD, and KKGK…KPPE. Active-site for N-terminal protease activity residues include H49 and C69. Over residues 172 to 207 the composition is skewed to basic and acidic residues; that stretch reads KEEGATKKKQQKPDRLEKGRMKIVPKESEKDSKTKP. N272, N281, N296, and N335 each carry an N-linked (GlcNAc...) asparagine; by host glycan. 2 disulfide bridges follow: C308–C352 and C338–C339. Active-site for E(rns) glycoprotein RNase activity residues include H344, E345, K348, and H349. N365 and N370 each carry an N-linked (GlcNAc...) asparagine; by host glycan. Cystine bridges form between C380–C425 and C384–C408. N413, N487, and N597 each carry an N-linked (GlcNAc...) asparagine; by host glycan. Over 498 to 666 the chain is Lumenal; sequence ASPYCDVDRK…WNAATTTAFL (169 aa). The helical transmembrane segment at 667–687 threads the bilayer; the sequence is VCLIKMVRGQVVQGILWLLLI. The Lumenal segment spans residues 688-1035; the sequence is TGVQGHLDCK…DHHRDYFAES (348 aa). 2 disulfides stabilise this stretch: C696-C740 and C751-C798. N809, N878, N922, and N990 each carry an N-linked (GlcNAc...) asparagine; by host glycan. A run of 8 helical transmembrane segments spans residues 1036–1056, 1079–1099, 1108–1128, 1144–1164, 1189–1209, 1217–1237, 1247–1267, and 1281–1301; these read ILVV…LVTY, NLLT…YLLL, VLLL…VILL, LGQI…LIIA, PGVD…SYVT, WLQC…LIHL, IPNW…TVVT, and VPIL…ILIL. An N-linked (GlcNAc...) asparagine; by host glycan is attached at N1357. The helical transmembrane segment at 1360 to 1380 threads the bilayer; sequence MLLPLVRATLISCVSSKWQLI. N1419 carries N-linked (GlcNAc...) asparagine; by host glycosylation. One can recognise a Peptidase C74 domain in the interval 1441–1589; the sequence is RNLIIKHKVR…DLEHLGWILR (149 aa). H1447 acts as the For cysteine protease NS2 activity in catalysis. A glycan (N-linked (GlcNAc...) asparagine; by host) is linked at N1451. Active-site for cysteine protease NS2 activity residues include E1461 and C1512. A helical membrane pass occupies residues 1568 to 1588; sequence MLMVGNLGEEVGDLEHLGWIL. A Peptidase S31 domain is found at 1590–1763; sequence GPAVCKKITE…LPIFEASSGR (174 aa). Active-site charge relay system; for serine protease NS3 activity residues include H1658 and D1695. The N-linked (GlcNAc...) asparagine; by host glycan is linked to N1713. The Charge relay system; for serine protease NS3 activity role is filled by S1752. A Helicase ATP-binding domain is found at 1802–1960; that stretch reads ITSMNRGDFK…QKHPIEEFIA (159 aa). Residue 1815 to 1822 coordinates ATP; it reads LATGAGKT. The DEAH box motif lies at 1910 to 1913; it reads DEYH. A Helicase C-terminal domain is found at 1978 to 2143; the sequence is GLKIPVDEMK…NVTKSFREMN (166 aa). N-linked (GlcNAc...) asparagine; by host glycosylation is found at N2134, N2217, N2494, N2682, N2751, N2891, and N2988. GTP contacts are provided by T3499 and L3501. A RdRp catalytic domain is found at 3518 to 3641; the sequence is PVAVSFDTKA…ITEKGLGLKF (124 aa). Residue N3688 is glycosylated (N-linked (GlcNAc...) asparagine; by host). Positions 3696 and 3704 each coordinate GTP. N-linked (GlcNAc...) asparagine; by host glycans are attached at residues N3777 and N3793.

It belongs to the pestivirus polyprotein family. In terms of assembly, homodimer; disulfide-linked. As to quaternary structure, homodimer; disulfide-linked. Heterodimer with E1; disulfide-linked. Interacts with host IFIH1/MDA5; this interaction is involved in the inhibition of IFN-beta production. Heavily glycosylated. Post-translationally, the viral RNA of pestiviruses is expressed as a single polyprotein which undergoes post-translational proteolytic processing resulting in the production of at least eleven individual proteins. The N-terminal protease cleaves itself from the nascent polyprotein autocatalytically and thereby generates the N-terminus of the adjacent viral capsid protein C. In terms of processing, cleavage between E2 and p7 is partial.

Its subcellular location is the virion. It localises to the host membrane. The protein localises to the virion membrane. The protein resides in the host endoplasmic reticulum membrane. It is found in the host cytoplasm. The catalysed reaction is Leu is conserved at position P1 for all four cleavage sites. Alanine is found at position P1' of the NS4A-NS4B cleavage site, whereas serine is found at position P1' of the NS3-NS4A, NS4B-NS5A and NS5A-NS5B cleavage sites.. It catalyses the reaction RNA(n) + a ribonucleoside 5'-triphosphate = RNA(n+1) + diphosphate. The enzyme catalyses a ribonucleoside 5'-triphosphate + H2O = a ribonucleoside 5'-diphosphate + phosphate + H(+). It carries out the reaction ATP + H2O = ADP + phosphate + H(+). The catalysed reaction is a ribonucleotidyl-ribonucleotide-RNA + H2O = a 3'-end 3'-phospho-ribonucleotide-RNA + a 5'-end dephospho-ribonucleoside-RNA + H(+). It catalyses the reaction a ribonucleotidyl-ribonucleotide-RNA = a 3'-end 2',3'-cyclophospho-ribonucleotide-RNA + a 5'-end dephospho-ribonucleoside-RNA. The enzyme catalyses a 3'-end 2',3'-cyclophospho-ribonucleotide-RNA + H2O = a 3'-end 3'-phospho-ribonucleotide-RNA + H(+). Its activity is regulated as follows. Inhibited by Zn(2+), which binds the catalytic site. In terms of biological role, leader cysteine autoprotease that cleaves itself from the nascent polyprotein during translation of the viral mRNA. Once released, plays a role in the inhibition of host innate immune response by interacting with host IRF3 and inducing its proteasomal degradation. Packages viral RNA to form a viral nucleocapsid and thereby protects viral RNA. Also plays a role in transcription regulation. Protects the incoming virus against IFN-induced effectors. Its function is as follows. Initial binding to target cell probably involves interaction of E(rns) with glycosaminoglycans. Also possesses intrinsic ribonuclease (RNase) activity that can inhibit the production of type I interferon and assist in the development of persistent infections. Functionally, E1 and/or E2 are probably responsible of cell attachment with CD46 and subsequent fusion after internalization of the virion by endocytosis. In terms of biological role, E1 and/or E2 are probably responsible of cell attachment with CD46 and subsequent fusion after internalization of the virion by endocytosis. Probably functions as a coeffector of fusion providing structural integrity to the fusion complex and possibly controlling exposure of the fusion motif in E1. Plays an essential role in the virus replication cycle by acting as a viroporin. Forms ion conductive pores, which alters the cell permeability allowing the transport of ions and other small molecules. Forms a leader sequence to properly orient NS2 in the membrane. Its function is as follows. Uncleaved NS2-3 is required for production of infectious virus. Functionally, plays a role in the regulation of viral RNA replication. In terms of biological role, multifunctional protein that contains an N-terminal protease and a C-terminal helicase, playing essential roles in viral polyprotein processing and viral genome replication. The chymotrypsin-like serine protease activity utilizes NS4A as an essential cofactor and catalyzes the cleavage of the polyprotein leading to the release of NS4A, NS4B, NS5A, and NS5B. Interacts with NS5B to enhance RNA-dependent RNA polymerase activity. Acts as a cofactor for the NS3 protease activity. Its function is as follows. Induces a specific membrane alteration that serves as a scaffold for the virus replication complex. Plays a role in the inhibition of host innate immune response by inhibiting RIGI/IFIH1-mediated IFN-beta production. Functionally, replicates the viral (+) and (-) genome. Initiates the primer-independent RNA replication via a de novo mechanism requiring GTP. The sequence is that of Genome polyprotein from Bos taurus (Bovine).